A 277-amino-acid chain; its full sequence is Large ribosomal subunit protein uL2 (277 aa).

2 disordered regions span residues Lys32 to Gly58 and Val225 to Asn277.

The protein belongs to the universal ribosomal protein uL2 family. Part of the 50S ribosomal subunit. Forms a bridge to the 30S subunit in the 70S ribosome.

Its function is as follows. One of the primary rRNA binding proteins. Required for association of the 30S and 50S subunits to form the 70S ribosome, for tRNA binding and peptide bond formation. It has been suggested to have peptidyltransferase activity; this is somewhat controversial. Makes several contacts with the 16S rRNA in the 70S ribosome. In Borrelia recurrentis (strain A1), this protein is Large ribosomal subunit protein uL2.